Reading from the N-terminus, the 473-residue chain is Sensor histidine kinase YclK (473 aa).

The Cytoplasmic segment spans residues 1-9 (MMKIKYLYQ). A helical membrane pass occupies residues 10–30 (LLLSHISILILAFVIIISLFS). The Extracellular segment spans residues 31–164 (HFVKEFAYQN…GVEQMVNQVN (134 aa)). The helical transmembrane segment at 165-185 (LYMFYAVISTLVITILVSWLL) threads the bilayer. Over 186-473 (SKFHVKRIQK…IRLPLTAKQQ (288 aa)) the chain is Cytoplasmic. One can recognise an HAMP domain in the interval 187–239 (KFHVKRIQKLREATDKVASGDYDIHLENSYGDEIGVLASDFNIMAKKLKQSRD). The region spanning 254 to 470 (DVSHELKTPL…KFIIRLPLTA (217 aa)) is the Histidine kinase domain. A Phosphohistidine; by autocatalysis modification is found at His257.

Its subcellular location is the cell membrane. It carries out the reaction ATP + protein L-histidine = ADP + protein N-phospho-L-histidine.. Functionally, could be member of the two-component regulatory system YclK/YclJ. Potentially phosphorylates YclJ. The protein is Sensor histidine kinase YclK (yclK) of Bacillus subtilis (strain 168).